Consider the following 420-residue polypeptide: MVSRQEQFEQVQAVKKSINTASEEVKNQALLAMADHLVAATEEILAANALDMAAAKGKISDVMLDRLYLDADRIEAMARGIREVVALPDPIGEVLETSQLENGLVITKKRVAIGVIGIIYESRPNVTSDAAALTLKSGNAVVLRSGKDAYQTTHAIVTALKKGLETTTIHPNVIQLVEDTSRESSYAMMKAKGYLDLLIPRGGAGLINAVVENAIVPVIETGTGIVHVYVDKDADEDKALSIINNAKTSRPSVCNAMEVLLVHENKAASILPRLDQMLVAERKEAGLEPIQFRLDSKASQFVSGQAAETQDFDTEFLDYVLAVKVVSSLEEAVAHIESHSTHHSDAIVTENAEAAAYFTDQVDSAAVYVNASTRFTDGGQFGLGCEMGISTQKLHARGPMGLKELTSYKYVVAGDGQIRE.

This sequence belongs to the gamma-glutamyl phosphate reductase family.

Its subcellular location is the cytoplasm. It carries out the reaction L-glutamate 5-semialdehyde + phosphate + NADP(+) = L-glutamyl 5-phosphate + NADPH + H(+). Its pathway is amino-acid biosynthesis; L-proline biosynthesis; L-glutamate 5-semialdehyde from L-glutamate: step 2/2. In terms of biological role, catalyzes the NADPH-dependent reduction of L-glutamate 5-phosphate into L-glutamate 5-semialdehyde and phosphate. The product spontaneously undergoes cyclization to form 1-pyrroline-5-carboxylate. In Streptococcus pneumoniae (strain CGSP14), this protein is Gamma-glutamyl phosphate reductase.